Reading from the N-terminus, the 354-residue chain is uncharacterized protein (354 aa).

Over residues 309 to 326 (VNSANSINTANTRSQTGG) the composition is skewed to polar residues. Residues 309–333 (VNSANSINTANTRSQTGGQDEEDFE) are disordered. Residues 326–353 (GQDEEDFEKKYKKYKNKYAKLKNQKTSN) adopt a coiled-coil conformation.

It localises to the virion. This is an uncharacterized protein from Acanthamoeba polyphaga (Amoeba).